The sequence spans 363 residues: Probable cinnamyl alcohol dehydrogenase 6 (363 aa).

Position 51 (Cys-51) interacts with Zn(2+). Ser-53 serves as a coordination point for NADP(+). His-73, Glu-74, Cys-104, Cys-107, Cys-110, Cys-118, and Cys-167 together coordinate Zn(2+). Residues Ser-171, Gly-192 to Gly-197, Ser-215 to Lys-220, Thr-255, Gly-279, and Ser-302 to Ile-304 contribute to the NADP(+) site.

Belongs to the zinc-containing alcohol dehydrogenase family. In terms of assembly, homodimer. The cofactor is Zn(2+). Expressed in the primary and lateral roots, and root caps. Expressed in the hypocotyl, cotyledon veins and hydathodes. In stems, expressed in the vascular cambium, interfascicular cambium and developing xylem. Expressed in the style, anthers, stamen filaments, vascular tissues of sepals, stigmatic regions in flowers, and abscission and style regions of siliques.

It carries out the reaction (E)-cinnamyl alcohol + NADP(+) = (E)-cinnamaldehyde + NADPH + H(+). The catalysed reaction is (E)-coniferol + NADP(+) = (E)-coniferaldehyde + NADPH + H(+). It catalyses the reaction (E)-sinapyl alcohol + NADP(+) = (E)-sinapaldehyde + NADPH + H(+). The enzyme catalyses (E)-4-coumaroyl alcohol + NADP(+) = (E)-4-coumaraldehyde + NADPH + H(+). It carries out the reaction (E)-caffeyl alcohol + NADP(+) = (E)-caffeyl aldehyde + NADPH + H(+). The protein operates within aromatic compound metabolism; phenylpropanoid biosynthesis. Functionally, involved in lignin biosynthesis. Catalyzes the final step specific for the production of lignin monomers. Catalyzes the NADPH-dependent reduction of coniferaldehyde, 5-hydroxyconiferaldehyde, sinapaldehyde, 4-coumaraldehyde and caffeyl aldehyde to their respective alcohols. This is Probable cinnamyl alcohol dehydrogenase 6 (CAD6) from Arabidopsis thaliana (Mouse-ear cress).